Reading from the N-terminus, the 433-residue chain is MKNELMQRLRLKYPPPDGYCRWGRIQDVSATLLNAWLPGVFMGELCCIKPGEELAEVVGINGSKALLSPFTSTIGLHCGQQVMALRRRHQVPVGEALLGRVIDGFGRPLDGRELPDVCWKDYDAMPPPAMVRQPITQPLMTGIRAIDSVATCGEGQRVGIFSAPGVGKSTLLAMLCNAPDADSNVLVLIGERGREVREFIDFTLSEETRKRCVIVVATSDRPALERVRALFVATTIAEFFRDNGKRVVLLADSLTRYARAAREIALAAGETAVSGEYPPGVFSALPRLLERTGMGEKGSITAFYTVLVEGDDMNEPLADEVRSLLDGHIVLSRRLAERGHYPAIDVLATLSRVFPVVTSHEHRQLAAILRRCLALYQEVELLIRIGEYQRGVDTDTDKAIDTYPDICTFLRQSKDEVCGPELLIEKLHQILTE.

Residue 165–170 (GVGKST) participates in ATP binding.

Belongs to the ATPase alpha/beta chains family. T3SS ATPase subfamily. The core secretion machinery of the T3SS is composed of approximately 20 different proteins, including cytoplasmic components, a base, an export apparatus and a needle. This subunit is part of the cytosolic complex. Forms homohexamers. Forms a complex with SsaK/SctL (stator protein) and SsaQ/SctQ (the major sorting platform component). Interacts with the T3SS-2 specific chaperones SsaE, SseA, SscA, SscB, and SrcA.

It localises to the cytoplasm. It carries out the reaction ATP + H2O + cellular proteinSide 1 = ADP + phosphate + cellular proteinSide 2.. ATPase component of the type III secretion system (T3SS), also called injectisome, which is used to inject bacterial effector proteins into eukaryotic host cells. Acts as a molecular motor to provide the energy that is required for the export of proteins. Required for type III secretion apparatus (T3SA) formation, secretion of a subset of SPI-2 effectors and virulence. May play a critical role in T3SS substrate recognition, disassembly of the effector/chaperone complex and unfolding of the effector in an ATP-dependent manner prior to secretion. Releases the effector protein SseB from the T3SS-2 specific chaperone SsaE in an ATP-dependent manner. The chain is SPI-2 type 3 secretion system ATPase from Salmonella typhimurium (strain LT2 / SGSC1412 / ATCC 700720).